The following is a 207-amino-acid chain: LexA repressor (207 aa).

Residues 28 to 48 (VREIGEAVGLASSSTVHGHLS) constitute a DNA-binding region (H-T-H motif). Residues serine 130 and lysine 168 each act as for autocatalytic cleavage activity in the active site.

This sequence belongs to the peptidase S24 family. In terms of assembly, homodimer.

It catalyses the reaction Hydrolysis of Ala-|-Gly bond in repressor LexA.. Functionally, represses a number of genes involved in the response to DNA damage (SOS response), including recA and lexA. In the presence of single-stranded DNA, RecA interacts with LexA causing an autocatalytic cleavage which disrupts the DNA-binding part of LexA, leading to derepression of the SOS regulon and eventually DNA repair. The protein is LexA repressor of Staphylococcus aureus (strain MSSA476).